Here is a 285-residue protein sequence, read N- to C-terminus: Catechol-2,3-dioxygenase (285 aa).

VOC domains are found at residues 9-126 and 169-285; these read HIGY…MYAD and IIGH…TFVI. Fe cation is bound by residues His-213 and Glu-264.

This sequence belongs to the extradiol ring-cleavage dioxygenase family. It depends on Fe(2+) as a cofactor.

The catalysed reaction is catechol + O2 = (2Z,4E)-2-hydroxy-6-oxohexa-2,4-dienoate + H(+). In terms of biological role, involved in the meta cleavage of catechol to 2-hydroxymuconic semialdehyde. Essential for growth and viability in the presence of catechol and probably involved in the detoxification of catechol. This is Catechol-2,3-dioxygenase (catE) from Bacillus subtilis (strain 168).